The primary structure comprises 461 residues: ATP synthase subunit beta 2 (461 aa).

151-158 (GGAGVGKT) is an ATP binding site.

This sequence belongs to the ATPase alpha/beta chains family. In terms of assembly, F-type ATPases have 2 components, CF(1) - the catalytic core - and CF(0) - the membrane proton channel. CF(1) has five subunits: alpha(3), beta(3), gamma(1), delta(1), epsilon(1). CF(0) has three main subunits: a(1), b(2) and c(9-12). The alpha and beta chains form an alternating ring which encloses part of the gamma chain. CF(1) is attached to CF(0) by a central stalk formed by the gamma and epsilon chains, while a peripheral stalk is formed by the delta and b chains.

The protein localises to the cell inner membrane. The enzyme catalyses ATP + H2O + 4 H(+)(in) = ADP + phosphate + 5 H(+)(out). Its function is as follows. Produces ATP from ADP in the presence of a proton gradient across the membrane. The catalytic sites are hosted primarily by the beta subunits. The polypeptide is ATP synthase subunit beta 2 (Pseudoalteromonas atlantica (strain T6c / ATCC BAA-1087)).